Reading from the N-terminus, the 854-residue chain is Golgin subfamily A member 6-like protein 22 (854 aa).

6 disordered regions span residues 1-114 (MLMW…HQEA), 320-348 (QEEK…MRRQ), 366-447 (MHEQ…MWRQ), 481-568 (QEEK…MWRQ), 581-681 (RQEE…EQEE), and 714-854 (QEEK…MQEH). A compositionally biased stretch (basic residues) spans 15–35 (LPTHPHLPTHPHLPTHPHLPT). Over residues 45–66 (MSKETRQSKLAEAKEQLTDHHP) the composition is skewed to basic and acidic residues. Polar residues-rich tracts occupy residues 67–77 (QTNPSVGTAAS) and 85–97 (NNGT…TSGG). Residues 100-114 (SPEDEQKASHQHQEA) show a composition bias toward basic and acidic residues. Residues 103–854 (DEQKASHQHQ…RQQEEKMQEH (752 aa)) adopt a coiled-coil conformation.

It belongs to the GOLGA6 family.

The protein is Golgin subfamily A member 6-like protein 22 of Homo sapiens (Human).